Here is a 302-residue protein sequence, read N- to C-terminus: Large ribosomal subunit protein uL4m (302 aa).

This sequence belongs to the universal ribosomal protein uL4 family. In terms of assembly, component of the mitochondrial ribosome large subunit (39S) which comprises a 16S rRNA and about 50 distinct proteins.

It is found in the mitochondrion. This is Large ribosomal subunit protein uL4m (mrpl4) from Danio rerio (Zebrafish).